Consider the following 2488-residue polypeptide: PKS-NRPS hybrid synthetase swnK (2488 aa).

The adenylation (A) domain stretch occupies residues 33–422 (FEQVADRFPD…GRIDGVVKIR (390 aa)). In terms of domain architecture, Carrier 1 spans 523-598 (QPTSELEQRI…ALAAYLAGTG (76 aa)). Serine 558 bears the O-(pantetheine 4'-phosphoryl)serine mark. Residues 616 to 1039 (HEDIAIVSMA…GTNAHVIVEE (424 aa)) form the Ketosynthase family 3 (KS3) domain. Catalysis depends on for beta-ketoacyl synthase activity residues cysteine 785, histidine 920, and histidine 960. Residues 1149–1471 (LFTGQGSQLP…SLSELHVRHV (323 aa)) form a malonyl-CoA:ACP transacylase (MAT) domain region. Residues 1723 to 1901 (GAVLVTGGLG…ASSVAYGTWA (179 aa)) are ketoreductase (KR) domain. One can recognise a Carrier 2 domain in the interval 2002–2077 (SIVLHMVQAT…SLSEFLLCRL (76 aa)). Serine 2037 is subject to O-(pantetheine 4'-phosphoryl)serine. Residues 2084–2103 (STSSPSDTDGATPSTPTSAA) form a disordered region. The segment at 2136-2364 (VTGATGFVGT…VLPVDYLCGT (229 aa)) is thioester reductase (TE) domain.

The protein in the N-terminal section; belongs to the NRP synthetase family.

The catalysed reaction is L-pipecolate + malonyl-CoA + 2 NADPH + 4 H(+) = (8aS)-octahydroindolizin-1-one + CO2 + 2 NADP(+) + CoA + 2 H2O. The enzyme catalyses L-pipecolate + malonyl-CoA + 3 NADPH + 5 H(+) = (1R,8aS)-octahydroindolizin-1-ol + CO2 + 3 NADP(+) + CoA + 2 H2O. It catalyses the reaction L-pipecolate + malonyl-CoA + 3 NADPH + 5 H(+) = (1S,8aS)-octahydroindolizin-1-ol + CO2 + 3 NADP(+) + CoA + 2 H2O. It participates in mycotoxin biosynthesis. Its function is as follows. PKS-NRPS hybrid synthetase; part of the gene cluster that mediates the biosynthesis of swainsonine (SW), a cytotoxic fungal alkaloid and a potential cancer therapy drug. Swainsonine production occurs via a multibranched pathway and is dispensable for fungal colonization of plants and infection of insect hosts. The first step of swainsonine biosynthesis is the production of the precursor pipecolic acid (PA) via conversion of L-lysine (Lys) to 1-piperideine-6-carboxylate (P6C) by the aminotransferase swnA, the latter being further reduced to PA by the reductase swnR. PA can be converted from lysine by both the SW biosynthetic cluster and the unclustered genes such as lysine cyclodeaminase. The PKS-NRPS hybrid synthetase swnK uptakes and condensates PA and malonyl-CoA with and without skipping of the ketoreductase (KR) domain in order to produce 3 intermediates, 1-oxoindolizidine, (1S)-1-hydroxyindolizin, and (1R)-1-hydroxyindolizine; with the transisomer (1S)-1-hydroxyindolizin being predominant. The terminal thioester reductase (TE) domain of swnK is involved in reduction of the thioester bond to release the intermediate aldehydes. The oxidoreductase swnN could contribute to the reduction of 1-oxoindolizidine to (1S)-1-hydroxyindolizin and (1R)-1-hydroxyindolizine, contributing to the major route of SW production. The dioxygenase swnH2 would be responsible for the oxidization of (1R)-1-hydroxyindolizine into (1R,2S)-1,2-dihydroxyindolizine and of (1S)-1-hydroxyindolizin to yield both (1R,2S)-1,2-dihydroxyindolizine and (1S,2S)-1,2-dihydroxyindolizine. The dioxygenase swnH1 then performs the conversion of the 1,2-dihydroxyindolizine epimers to SW. The chain is PKS-NRPS hybrid synthetase swnK from Metarhizium robertsii (strain ARSEF 23 / ATCC MYA-3075) (Metarhizium anisopliae (strain ARSEF 23)).